The primary structure comprises 278 residues: Membrane protein insertase YidC 2 (278 aa).

The signal sequence occupies residues Met1–Gly18. Residue Cys19 is the site of N-palmitoyl cysteine attachment. The S-diacylglycerol cysteine moiety is linked to residue Cys19. 4 helical membrane-spanning segments follow: residues Gly55–Ile75, Met132–Leu152, Leu176–His196, and Ala224–Phe244.

The protein belongs to the OXA1/ALB3/YidC family. Type 2 subfamily.

Its subcellular location is the cell membrane. In terms of biological role, required for the insertion and/or proper folding and/or complex formation of integral membrane proteins into the membrane. Involved in integration of membrane proteins that insert both dependently and independently of the Sec translocase complex, as well as at least some lipoproteins. This is Membrane protein insertase YidC 2 from Staphylococcus epidermidis (strain ATCC 12228 / FDA PCI 1200).